The chain runs to 341 residues: Uroporphyrinogen decarboxylase (341 aa).

Residues 23 to 27 (RQAGR), aspartate 73, tyrosine 147, serine 202, and histidine 318 contribute to the substrate site.

This sequence belongs to the uroporphyrinogen decarboxylase family. Homodimer.

The protein localises to the cytoplasm. It carries out the reaction uroporphyrinogen III + 4 H(+) = coproporphyrinogen III + 4 CO2. Its pathway is porphyrin-containing compound metabolism; protoporphyrin-IX biosynthesis; coproporphyrinogen-III from 5-aminolevulinate: step 4/4. Functionally, catalyzes the decarboxylation of four acetate groups of uroporphyrinogen-III to yield coproporphyrinogen-III. This chain is Uroporphyrinogen decarboxylase, found in Erythrobacter litoralis (strain HTCC2594).